Reading from the N-terminus, the 338-residue chain is Ketol-acid reductoisomerase (NADP(+)) (338 aa).

The region spanning 3–183 (IDVFYDDDAD…GGARAGVIPT (181 aa)) is the KARI N-terminal Rossmann domain. NADP(+) is bound by residues 26–29 (YGSQ), R49, S52, S54, and 84–87 (DTSQ). H109 is a catalytic residue. G135 is a binding site for NADP(+). The KARI C-terminal knotted domain occupies 184–329 (TFEAETVTDL…AKLRDLMSWV (146 aa)). Mg(2+)-binding residues include D192, E196, E228, and E232. A substrate-binding site is contributed by S253.

Belongs to the ketol-acid reductoisomerase family. Mg(2+) is required as a cofactor.

The enzyme catalyses (2R)-2,3-dihydroxy-3-methylbutanoate + NADP(+) = (2S)-2-acetolactate + NADPH + H(+). The catalysed reaction is (2R,3R)-2,3-dihydroxy-3-methylpentanoate + NADP(+) = (S)-2-ethyl-2-hydroxy-3-oxobutanoate + NADPH + H(+). It functions in the pathway amino-acid biosynthesis; L-isoleucine biosynthesis; L-isoleucine from 2-oxobutanoate: step 2/4. Its pathway is amino-acid biosynthesis; L-valine biosynthesis; L-valine from pyruvate: step 2/4. Its function is as follows. Involved in the biosynthesis of branched-chain amino acids (BCAA). Catalyzes an alkyl-migration followed by a ketol-acid reduction of (S)-2-acetolactate (S2AL) to yield (R)-2,3-dihydroxy-isovalerate. In the isomerase reaction, S2AL is rearranged via a Mg-dependent methyl migration to produce 3-hydroxy-3-methyl-2-ketobutyrate (HMKB). In the reductase reaction, this 2-ketoacid undergoes a metal-dependent reduction by NADPH to yield (R)-2,3-dihydroxy-isovalerate. This is Ketol-acid reductoisomerase (NADP(+)) from Corynebacterium jeikeium (strain K411).